The sequence spans 206 residues: Small ribosomal subunit protein uS4 (206 aa).

Residues 96-156 enclose the S4 RNA-binding domain; that stretch reads GRLDNVVYRM…EKSKKQARIK (61 aa).

This sequence belongs to the universal ribosomal protein uS4 family. Part of the 30S ribosomal subunit. Contacts protein S5. The interaction surface between S4 and S5 is involved in control of translational fidelity.

Functionally, one of the primary rRNA binding proteins, it binds directly to 16S rRNA where it nucleates assembly of the body of the 30S subunit. In terms of biological role, with S5 and S12 plays an important role in translational accuracy. The polypeptide is Small ribosomal subunit protein uS4 (Haemophilus influenzae (strain 86-028NP)).